The following is a 381-amino-acid chain: Prostatic acid phosphatase (381 aa).

The first 31 residues, 1–31, serve as a signal peptide directing secretion; it reads MRAVPLPLSRTASLSLGFLLLLSLCLDPGQA. Arg-42 serves as a coordination point for substrate. His-43 (nucleophile) is an active-site residue. Residue Arg-46 participates in substrate binding. N-linked (GlcNAc...) asparagine glycosylation occurs at Asn-93. Arg-110 is a binding site for substrate. 3 disulfides stabilise this stretch: Cys-160–Cys-371, Cys-214–Cys-312, and Cys-346–Cys-350. N-linked (GlcNAc...) asparagine glycosylation is present at Asn-219. His-288 is a binding site for substrate. Catalysis depends on Asp-289, which acts as the Proton donor. Asn-332 carries N-linked (GlcNAc...) asparagine glycosylation.

It belongs to the histidine acid phosphatase family. As to quaternary structure, homodimer; dimer formation is required for phosphatase activity. In terms of tissue distribution, expressed in salivary gland, thymus and thyroid gland. Widely expressed in prostate lobes, brain, kidney, liver, lung, muscle, placenta, salivary gland, spleen, thyroid and thymus. Locates to Schwann cells and fibroblasts. Expressed in peptidergic and non-peptidergic nociceptive (pain-sensing) neurons. Preferentially expressed in non-peptidergic doral root ganglia neurons.

The protein resides in the secreted. It is found in the cell membrane. Its subcellular location is the lysosome membrane. It carries out the reaction a phosphate monoester + H2O = an alcohol + phosphate. The enzyme catalyses a ribonucleoside 5'-phosphate + H2O = a ribonucleoside + phosphate. The catalysed reaction is 1-(9Z-octadecenoyl)-sn-glycero-3-phosphate + H2O = 1-(9Z-octadecenoyl)-sn-glycerol + phosphate. It catalyses the reaction O-phospho-L-tyrosyl-[protein] + H2O = L-tyrosyl-[protein] + phosphate. Functionally, a non-specific tyrosine phosphatase that dephosphorylates a diverse number of substrates under acidic conditions (pH 4-6) including alkyl, aryl, and acyl orthophosphate monoesters and phosphorylated proteins. Has lipid phosphatase activity and inactivates lysophosphatidic acid in seminal plasma. In addition to its tyrosine phosphatase activity, also has ecto-5'-nucleotidase activity in dorsal root ganglion (DRG) neurons. Generates adenosine from AMP. This extracellular adenosine leads to a decrease in chronic pain by activating A1R in nociceptive neurons. The polypeptide is Prostatic acid phosphatase (Acp3) (Mus musculus (Mouse)).